Reading from the N-terminus, the 306-residue chain is Ornithine carbamoyltransferase (306 aa).

Carbamoyl phosphate-binding positions include 51-54, Gln78, Arg102, and 129-132; these read STRT and HPVQ. L-ornithine contacts are provided by residues Asn159, Asp223, and 227–228; that span reads SM. Residues 263 to 264 and Arg291 each bind carbamoyl phosphate; that span reads CL.

Belongs to the aspartate/ornithine carbamoyltransferase superfamily. OTCase family.

The protein resides in the cytoplasm. It carries out the reaction carbamoyl phosphate + L-ornithine = L-citrulline + phosphate + H(+). It participates in amino-acid biosynthesis; L-arginine biosynthesis; L-arginine from L-ornithine and carbamoyl phosphate: step 1/3. Functionally, reversibly catalyzes the transfer of the carbamoyl group from carbamoyl phosphate (CP) to the N(epsilon) atom of ornithine (ORN) to produce L-citrulline. The sequence is that of Ornithine carbamoyltransferase from Sulfurovum sp. (strain NBC37-1).